A 578-amino-acid polypeptide reads, in one-letter code: Protein BONZAI 1 (578 aa).

The N-myristoyl glycine moiety is linked to residue G2. 2 C2 domains span residues 26–163 (ALGA…TSTL) and 176–303 (QPHH…NFSL). Residues D63, D69, D122, and D124 each contribute to the Ca(2+) site. One can recognise a VWFA domain in the interval 341–560 (NFMVAIDFTA…SVVQALLAEL (220 aa)).

This sequence belongs to the copine family. Interacts (via VWA domain) with BAP1 and BAP2. Interacts with HSP70-1 and HSP70-2. Ca(2+) is required as a cofactor. Based on mass spectrometry analysis, the N-peptide must be modified and there might be additional modifications other than myristoylation. Expressed in roots and flowers and, at higher levels, in leaves and stems. Strongly expressed in growing tissues. Not detected in green siliques.

The protein localises to the cell membrane. Its function is as follows. Negative regulator of cell death and defense responses. Negative regulator of several R genes, including SNC1. May have effects in promoting growth and development. May function in membrane trafficking and in fusion of vesicles with plasma membrane at low temperature. Exhibits calcium-dependent phospholipid binding properties. This Arabidopsis thaliana (Mouse-ear cress) protein is Protein BONZAI 1 (BON1).